The following is a 513-amino-acid chain: Nucleolar GTP-binding protein 2 (513 aa).

Positions M1 to R23 are disordered. Residues W211–P372 enclose the CP-type G domain. GTP is bound by residues G321–S328 and D365–I369. Residues G459–E513 are disordered. The span at P468–E486 shows a compositional bias: basic and acidic residues. Residues E487–E504 show a composition bias toward acidic residues.

It belongs to the TRAFAC class YlqF/YawG GTPase family. NOG2 subfamily.

It localises to the nucleus. Its subcellular location is the nucleolus. Its function is as follows. GTPase that associates with pre-60S ribosomal subunits in the nucleolus and is required for their nuclear export and maturation. The polypeptide is Nucleolar GTP-binding protein 2 (NOG2) (Kluyveromyces lactis (strain ATCC 8585 / CBS 2359 / DSM 70799 / NBRC 1267 / NRRL Y-1140 / WM37) (Yeast)).